The chain runs to 112 residues: Macrodomain Ori protein (112 aa).

The interval 91-112 is disordered; the sequence is FHTLSGGKPQVEGAEDYTEADD. The segment covering 103-112 has biased composition (acidic residues); sequence GAEDYTEADD.

Belongs to the MaoP family.

Functionally, involved in the organization of the Ori region of the chromosome into a macrodomain (MD). It constrains DNA mobility in the Ori macrodomain and limits long-distance DNA interactions with other chromosomal regions. This chain is Macrodomain Ori protein, found in Salmonella choleraesuis (strain SC-B67).